The following is a 1214-amino-acid chain: BOS complex subunit NOMO1 (1214 aa).

The signal sequence occupies residues 1-23; the sequence is MRAGRCAAALLLLLLSGAGRAIG. Over 24-1150 the chain is Extracellular; it reads SEDIVVGCGG…RKLPEQDIAQ (1127 aa). 3 N-linked (GlcNAc...) asparagine glycosylation sites follow: asparagine 42, asparagine 210, and asparagine 610. Residues 692 to 720 adopt a coiled-coil conformation; sequence KSAQELRREQQLAEIETRRQEREKNGKEE. Positions 708 to 726 are enriched in basic and acidic residues; that stretch reads TRRQEREKNGKEEGEEGRA. Positions 708–733 are disordered; that stretch reads TRRQEREKNGKEEGEEGRARPPGQEM. The helical transmembrane segment at 1151-1167 threads the bilayer; sequence GSYIALPLTLLLLLAGY. Over 1168 to 1214 the chain is Cytoplasmic; that stretch reads NHDKLIPLLLQLTSRLQGVRALGQAASDSSGPEDMKRQTKKQKTRRT. A disordered region spans residues 1190–1214; that stretch reads GQAASDSSGPEDMKRQTKKQKTRRT. 2 positions are modified to phosphoserine: serine 1196 and serine 1197. Over residues 1205 to 1214 the composition is skewed to basic residues; sequence QTKKQKTRRT.

As to quaternary structure, component of the back of Sec61 (BOS) complex, composed of NCLN/Nicalin, NOMO (NOMO1, NOMO2 or NOMO3) and TMEM147. The BOS complex is part of the multi-pass translocon (MPT) complex, composed of three subcomplexes, the GEL complex (composed of RAB5IF/OPTI and TMCO1), the BOS complex (composed of NCLN/Nicalin, NOMO and TMEM147) and the PAT complex (composed of WDR83OS/Asterix and CCDC47). The MPT complex associates with the SEC61 complex.

It localises to the endoplasmic reticulum membrane. Its function is as follows. Component of the multi-pass translocon (MPT) complex that mediates insertion of multi-pass membrane proteins into the lipid bilayer of membranes. The MPT complex takes over after the SEC61 complex: following membrane insertion of the first few transmembrane segments of proteins by the SEC61 complex, the MPT complex occludes the lateral gate of the SEC61 complex to promote insertion of subsequent transmembrane regions. The protein is BOS complex subunit NOMO1 of Mus musculus (Mouse).